A 598-amino-acid polypeptide reads, in one-letter code: Probable transporter mch1 (598 aa).

The disordered stretch occupies residues 1–49; it reads MASPTPAPRPDQISASTPLLQSDSTSSCASSIRSLSPSRRRHRNGRTSP. A compositionally biased stretch (low complexity) spans 22-37; that stretch reads SDSTSSCASSIRSLSP. The N-linked (GlcNAc...) asparagine glycan is linked to N57. 6 consecutive transmembrane segments (helical) span residues 63 to 83, 96 to 116, 122 to 142, 164 to 184, 202 to 222, and 241 to 261; these read ALLS…GHIF, GLSS…GYMC, GPLS…AAGV, LAYA…CSMY, GLAL…QSQL, and VFHF…LGTF. The segment at 315-334 is disordered; the sequence is AGILDPSKPDNDSDSEEEDD. N325 carries N-linked (GlcNAc...) asparagine glycosylation. Transmembrane regions (helical) follow at residues 355–375, 405–425, 453–473, 486–506, 516–536, and 565–585; these read HTMW…EAFI, IVGI…DLLA, FLLF…SGWI, LVGA…TVIW, GIVA…YSAV, and SAFW…LWAW.

This sequence belongs to the major facilitator superfamily.

The protein resides in the vacuole membrane. In terms of biological role, probable transporter. The chain is Probable transporter mch1 (mch1) from Neurospora crassa (strain ATCC 24698 / 74-OR23-1A / CBS 708.71 / DSM 1257 / FGSC 987).